The sequence spans 205 residues: MREKKEEDLQQVLNKVSEVGIDEVGRGAVFGPVFSAVVVLTEKNKFILKQFGVKDSKKLTPKKRKLLLPKILLLSSDYGIGQSSAREIDMLGIRVATELSMIRALKKLKEKPSEIIVDGPLLLRPWKGIQKNIVSGDSKITAIASASIVAKVARDNLMERLEKKYSGYLIFKNKGYGTREHFSNIKKNGITNLHRKSFLNQSDLI.

One can recognise an RNase H type-2 domain in the interval 16–205 (VSEVGIDEVG…KSFLNQSDLI (190 aa)). Positions 22, 23, and 118 each coordinate a divalent metal cation.

Belongs to the RNase HII family. Requires Mn(2+) as cofactor. Mg(2+) is required as a cofactor.

It localises to the cytoplasm. It catalyses the reaction Endonucleolytic cleavage to 5'-phosphomonoester.. Its function is as follows. Endonuclease that specifically degrades the RNA of RNA-DNA hybrids. In Prochlorococcus marinus (strain MIT 9312), this protein is Ribonuclease HII.